Consider the following 420-residue polypeptide: Tyrosine--tRNA ligase (420 aa).

An L-tyrosine-binding site is contributed by Tyr-33. The 'HIGH' region signature appears at 38 to 47 (PTADSLHVGH). 2 residues coordinate L-tyrosine: Tyr-167 and Gln-171. The 'KMSKS' region signature appears at 227–231 (KFGKT). Lys-230 serves as a coordination point for ATP. An S4 RNA-binding domain is found at 353–419 (LTVADLLVKV…GKRNYALVKV (67 aa)).

It belongs to the class-I aminoacyl-tRNA synthetase family. TyrS type 1 subfamily. As to quaternary structure, homodimer.

The protein localises to the cytoplasm. The catalysed reaction is tRNA(Tyr) + L-tyrosine + ATP = L-tyrosyl-tRNA(Tyr) + AMP + diphosphate + H(+). Its function is as follows. Catalyzes the attachment of tyrosine to tRNA(Tyr) in a two-step reaction: tyrosine is first activated by ATP to form Tyr-AMP and then transferred to the acceptor end of tRNA(Tyr). The sequence is that of Tyrosine--tRNA ligase from Anaeromyxobacter dehalogenans (strain 2CP-C).